The sequence spans 256 residues: Protein FixA (256 aa).

Belongs to the ETF beta-subunit/FixA family. In terms of assembly, heterodimer of FixA and FixB.

It functions in the pathway amine and polyamine metabolism; carnitine metabolism. Its function is as follows. Required for anaerobic carnitine reduction. May bring reductant to CaiA. The protein is Protein FixA of Escherichia fergusonii (strain ATCC 35469 / DSM 13698 / CCUG 18766 / IAM 14443 / JCM 21226 / LMG 7866 / NBRC 102419 / NCTC 12128 / CDC 0568-73).